The chain runs to 149 residues: Probable cyclic pyranopterin monophosphate synthase (149 aa).

Substrate-binding positions include 67 to 69 (LCH) and 103 to 104 (ME). D118 is an active-site residue.

The protein belongs to the MoaC family. As to quaternary structure, homohexamer; trimer of dimers.

The enzyme catalyses (8S)-3',8-cyclo-7,8-dihydroguanosine 5'-triphosphate = cyclic pyranopterin phosphate + diphosphate. The protein operates within cofactor biosynthesis; molybdopterin biosynthesis. Catalyzes the conversion of (8S)-3',8-cyclo-7,8-dihydroguanosine 5'-triphosphate to cyclic pyranopterin monophosphate (cPMP). The protein is Probable cyclic pyranopterin monophosphate synthase of Saccharolobus solfataricus (strain ATCC 35092 / DSM 1617 / JCM 11322 / P2) (Sulfolobus solfataricus).